Reading from the N-terminus, the 84-residue chain is Putative membrane protein insertion efficiency factor (84 aa).

This sequence belongs to the UPF0161 family.

The protein localises to the cell inner membrane. In terms of biological role, could be involved in insertion of integral membrane proteins into the membrane. The polypeptide is Putative membrane protein insertion efficiency factor (Shewanella oneidensis (strain ATCC 700550 / JCM 31522 / CIP 106686 / LMG 19005 / NCIMB 14063 / MR-1)).